The primary structure comprises 123 residues: Protein crumbs homolog 3 (123 aa).

The N-terminal stretch at 1–26 is a signal peptide; sequence MASPGLGLLLALGLPLLPARWGRAWG. The Extracellular segment spans residues 27 to 59; the sequence is QTLDPHVNENGTITPSAPGSGSNGALSQEAITA. Asn36 is a glycosylation site (N-linked (GlcNAc...) asparagine). The helical transmembrane segment at 60–80 threads the bilayer; the sequence is IIVVFSLLAAVLLAVGLVLLL. Over 81 to 120 the chain is Cytoplasmic; sequence RKLREKRQTQGTYRPSSEEQFNHAAEARAPQDSKETVRGC. The tract at residues 87 to 123 is disordered; that stretch reads RQTQGTYRPSSEEQFNHAAEARAPQDSKETVRGCLPI. Basic and acidic residues predominate over residues 96–117; that stretch reads SSEEQFNHAAEARAPQDSKETV. The PDZ-binding signature appears at 119–123; the sequence is GCLPI.

As to quaternary structure, component of a complex composed of CRB3, PALS1 and PATJ. Interacts (via C-terminus) with PALS1 (via PDZ domain). Interacts with PARD6A. Interacts (via intracellular domain) with EPB41L5. Interacts with WDR83.

It is found in the apical cell membrane. The protein resides in the cell junction. Its subcellular location is the tight junction. Its function is as follows. Involved in the establishment of cell polarity in mammalian epithelial cells. Regulates the morphogenesis of tight junctions. Involved in promoting phosphorylation and cytoplasmic retention of transcriptional coactivators YAP1 and WWTR1/TAZ which leads to suppression of TGFB1-dependent transcription of target genes such as CCN2/CTGF, SERPINE1/PAI1, SNAI1/SNAIL1 and SMAD7. The chain is Protein crumbs homolog 3 from Canis lupus familiaris (Dog).